Reading from the N-terminus, the 253-residue chain is 5'-nucleotidase SurE (253 aa).

A divalent metal cation contacts are provided by D8, D9, S40, and N92.

Belongs to the SurE nucleotidase family. The cofactor is a divalent metal cation.

It is found in the cytoplasm. It catalyses the reaction a ribonucleoside 5'-phosphate + H2O = a ribonucleoside + phosphate. Its function is as follows. Nucleotidase that shows phosphatase activity on nucleoside 5'-monophosphates. In Hyphomonas neptunium (strain ATCC 15444), this protein is 5'-nucleotidase SurE.